We begin with the raw amino-acid sequence, 402 residues long: MSDARLFTSESVTEGHPDKICDAISDSVLDALLADDPKSRVAVETLVTTGQVHVVGEVTTTAKAAFADITNTVRERILEIGYDHSDKGFDGLTCGVNIGIGKQSPDIAQGVDTAHETRVEGAADPLDSQGAGDQGLMFGYAIADTPELMPLPIALAHRLSRKLTEVRKNGTLDYLRPDGKTQVTVQYDGTTPVRLDTVVLSTQHADGIDLESQLAPEIKQHVIDAVLTELGHDTLDTSAPRILVNPTGKFVLGGPMGDAGLTGRKIIVDTYGGWARHGGGAFSGKDPSKVDRSAAYAMRWVAKNVVAAGLAQRVEVQVAYAIGKAAPVGLFVETFGSETVDPVKIQKAIGEVFDLRPGAIVRDLDLLRPIYAPTAAYGHFGRTDIELPWEQLDKVDDLKAAV.

ATP is bound at residue His16. A Mg(2+)-binding site is contributed by Asp18. Glu44 provides a ligand contact to K(+). L-methionine-binding residues include Glu57 and Gln103. The interval 103–113 (QSPDIAQGVDT) is flexible loop. ATP-binding positions include 178 to 180 (DGK), 249 to 250 (KF), Asp258, 264 to 265 (RK), Ala281, and Lys285. Asp258 serves as a coordination point for L-methionine. Residue Lys289 coordinates L-methionine.

The protein belongs to the AdoMet synthase family. Homotetramer; dimer of dimers. Mg(2+) is required as a cofactor. It depends on K(+) as a cofactor.

It is found in the cytoplasm. It catalyses the reaction L-methionine + ATP + H2O = S-adenosyl-L-methionine + phosphate + diphosphate. It functions in the pathway amino-acid biosynthesis; S-adenosyl-L-methionine biosynthesis; S-adenosyl-L-methionine from L-methionine: step 1/1. Functionally, catalyzes the formation of S-adenosylmethionine (AdoMet) from methionine and ATP. The overall synthetic reaction is composed of two sequential steps, AdoMet formation and the subsequent tripolyphosphate hydrolysis which occurs prior to release of AdoMet from the enzyme. This chain is S-adenosylmethionine synthase, found in Mycolicibacterium vanbaalenii (strain DSM 7251 / JCM 13017 / BCRC 16820 / KCTC 9966 / NRRL B-24157 / PYR-1) (Mycobacterium vanbaalenii).